The following is a 150-amino-acid chain: Linear element protein rec25 (150 aa).

A Phosphoserine modification is found at Ser-11.

As to quaternary structure, component of linear elements (LinEs), which are similar to synaptonemal complexes, at least composed of rec27, rec25, rec10 and mug20. Interacts with rec10; the interaction is direct.

It localises to the cytoplasm. The protein localises to the nucleus. The protein resides in the chromosome. Its function is as follows. During meiotic DNA recombination, binds to and may help activate DNA double-strand break (DSB) hotspot sites. This chain is Linear element protein rec25, found in Schizosaccharomyces pombe (strain 972 / ATCC 24843) (Fission yeast).